We begin with the raw amino-acid sequence, 89 residues long: Small ribosomal subunit protein uS15 (89 aa).

It belongs to the universal ribosomal protein uS15 family. In terms of assembly, part of the 30S ribosomal subunit. Forms a bridge to the 50S subunit in the 70S ribosome, contacting the 23S rRNA.

Its function is as follows. One of the primary rRNA binding proteins, it binds directly to 16S rRNA where it helps nucleate assembly of the platform of the 30S subunit by binding and bridging several RNA helices of the 16S rRNA. Forms an intersubunit bridge (bridge B4) with the 23S rRNA of the 50S subunit in the ribosome. In Pseudarthrobacter chlorophenolicus (strain ATCC 700700 / DSM 12829 / CIP 107037 / JCM 12360 / KCTC 9906 / NCIMB 13794 / A6) (Arthrobacter chlorophenolicus), this protein is Small ribosomal subunit protein uS15.